Consider the following 175-residue polypeptide: MTSSAMDNNEPKVLEMVYDATILPEGSSMDPNIMDCINRHINMCIQRTYSSSIIAILNRFLTMNKDELNNTQCHIIKEFMTYEQMAIDHYGEYVNAILYQIRKRPNQHHTIDLFKKIKRTPYDTFKVDPVEFVKKVIGFVSILNKYKPVYSYVLYENVLYDEFKCFINYVETKYF.

This sequence belongs to the poxviridae OPG036 family.

Its subcellular location is the host nucleus. Functionally, plays a role in the inhibition of host innate immune response. Within the host nucleus, inhibits activation of interferon-beta promoter by inhibiting IRF3 activation. In Homo sapiens (Human), this protein is Protein OPG036 (OPG036).